A 394-amino-acid polypeptide reads, in one-letter code: Elongation factor Tu (394 aa).

The 195-residue stretch at 10 to 204 (KPHVNVGTIG…HLDNYIPEPE (195 aa)) folds into the tr-type G domain. Residues 19–26 (GHVDHGKT) are G1. 19 to 26 (GHVDHGKT) lines the GTP pocket. Thr-26 lines the Mg(2+) pocket. Residues 60–64 (GITIN) are G2. Residues 81–84 (DCPG) form a G3 region. Residues 81–85 (DCPGH) and 136–139 (NKCD) each bind GTP. The interval 136–139 (NKCD) is G4. Positions 174-176 (SAL) are G5.

This sequence belongs to the TRAFAC class translation factor GTPase superfamily. Classic translation factor GTPase family. EF-Tu/EF-1A subfamily. Monomer.

It localises to the cytoplasm. The enzyme catalyses GTP + H2O = GDP + phosphate + H(+). GTP hydrolase that promotes the GTP-dependent binding of aminoacyl-tRNA to the A-site of ribosomes during protein biosynthesis. This Histophilus somni (strain 129Pt) (Haemophilus somnus) protein is Elongation factor Tu.